The following is a 620-amino-acid chain: Dopamine beta-hydroxylase (620 aa).

The Cytoplasmic portion of the chain corresponds to 1-19 (MQPHLSHQPCWSLPSPSVR). Residues 20 to 40 (EAASMYGTAVAIFLVILVAAL) traverse the membrane as a helical; Signal-anchor for type II membrane protein segment. Residues 41–620 (QGSEPPESPF…FVVITHGGRH (580 aa)) lie on the Intragranular side of the membrane. Positions 60-176 (GTLELSWNVS…DTVHLVYGIL (117 aa)) constitute a DOMON domain. Residues Asn-67 and Asn-187 are each glycosylated (N-linked (GlcNAc...) asparagine). Intrachain disulfides connect Cys-157–Cys-599, Cys-235–Cys-286, Cys-272–Cys-298, Cys-393–Cys-506, Cys-397–Cys-568, and Cys-469–Cys-491. Tyr-233 is a catalytic residue. Positions 265 and 266 each coordinate Cu(2+). Asn-274 carries an N-linked (GlcNAc...) asparagine glycan. Residue His-336 participates in Cu(2+) binding. Position 349 is a phosphoserine; by CaMK (Ser-349). His-415 is a catalytic residue. Residues His-415 and His-417 each coordinate Cu(2+). A glycan (N-linked (GlcNAc...) asparagine) is linked at Asn-475. Met-490 is a Cu(2+) binding site. Asn-569 and Asn-587 each carry an N-linked (GlcNAc...) asparagine glycan.

Belongs to the copper type II ascorbate-dependent monooxygenase family. As to quaternary structure, homotetramer; composed of two disulfide-linked dimers. Requires Cu(2+) as cofactor. In terms of processing, proteolytic cleavage after the membrane-anchor leads to the release of the soluble form. N-glycosylated. As to expression, chromaffin granules of the adrenal medulla and synaptic vesicles of the sympathetic nervous system.

It is found in the cytoplasmic vesicle. It localises to the secretory vesicle lumen. The protein resides in the secretory vesicle. Its subcellular location is the chromaffin granule lumen. The protein localises to the secreted. It is found in the secretory vesicle membrane. It localises to the chromaffin granule membrane. The enzyme catalyses dopamine + 2 L-ascorbate + O2 = (R)-noradrenaline + 2 monodehydro-L-ascorbate radical + H2O. It participates in catecholamine biosynthesis; (R)-noradrenaline biosynthesis; (R)-noradrenaline from dopamine: step 1/1. Functionally, catalyzes the hydroxylation of dopamine to noradrenaline (also known as norepinephrine), and is thus vital for regulation of these neurotransmitters. The chain is Dopamine beta-hydroxylase (Dbh) from Rattus norvegicus (Rat).